Reading from the N-terminus, the 96-residue chain is Large ribosomal subunit protein bL27 (96 aa).

Residues 1–9 (MLRLDLQFF) constitute a propeptide that is removed on maturation. The tract at residues 1-36 (MLRLDLQFFSTKKGQGSSKNGRDSESKRLGSKRADG) is disordered. Over residues 8 to 19 (FFSTKKGQGSSK) the composition is skewed to polar residues. A compositionally biased stretch (basic and acidic residues) spans 20–35 (NGRDSESKRLGSKRAD).

The protein belongs to the bacterial ribosomal protein bL27 family. In terms of processing, the N-terminus is cleaved by ribosomal processing cysteine protease Prp.

In Oceanobacillus iheyensis (strain DSM 14371 / CIP 107618 / JCM 11309 / KCTC 3954 / HTE831), this protein is Large ribosomal subunit protein bL27.